A 91-amino-acid polypeptide reads, in one-letter code: Small ribosomal subunit protein uS15 (91 aa).

The protein belongs to the universal ribosomal protein uS15 family. Part of the 30S ribosomal subunit. Forms a bridge to the 50S subunit in the 70S ribosome, contacting the 23S rRNA.

Functionally, one of the primary rRNA binding proteins, it binds directly to 16S rRNA where it helps nucleate assembly of the platform of the 30S subunit by binding and bridging several RNA helices of the 16S rRNA. In terms of biological role, forms an intersubunit bridge (bridge B4) with the 23S rRNA of the 50S subunit in the ribosome. The sequence is that of Small ribosomal subunit protein uS15 from Rickettsia bellii (strain OSU 85-389).